The following is a 198-amino-acid chain: Ribonuclease HII (198 aa).

Positions 11–198 (NLIAGVDEVG…GPVKRVLGLV (188 aa)) constitute an RNase H type-2 domain. Residues aspartate 17, glutamate 18, and aspartate 109 each contribute to the a divalent metal cation site.

It belongs to the RNase HII family. The cofactor is Mn(2+). It depends on Mg(2+) as a cofactor.

It localises to the cytoplasm. The catalysed reaction is Endonucleolytic cleavage to 5'-phosphomonoester.. Its function is as follows. Endonuclease that specifically degrades the RNA of RNA-DNA hybrids. This chain is Ribonuclease HII, found in Yersinia enterocolitica serotype O:8 / biotype 1B (strain NCTC 13174 / 8081).